Consider the following 379-residue polypeptide: Epoxyqueuosine reductase (379 aa).

Residue D139 is the Proton donor of the active site. A 4Fe-4S ferredoxin-type domain is found at 181 to 213 (IPLPVDQPVEEGCGKCVACMTICPTGAIVEPYT). Positions 193, 196, 199, 203, 219, 246, 249, and 253 each coordinate [4Fe-4S] cluster.

This sequence belongs to the QueG family. In terms of assembly, monomer. The cofactor is cob(II)alamin. [4Fe-4S] cluster serves as cofactor.

The protein resides in the cytoplasm. It catalyses the reaction epoxyqueuosine(34) in tRNA + AH2 = queuosine(34) in tRNA + A + H2O. It functions in the pathway tRNA modification; tRNA-queuosine biosynthesis. Functionally, catalyzes the conversion of epoxyqueuosine (oQ) to queuosine (Q), which is a hypermodified base found in the wobble positions of tRNA(Asp), tRNA(Asn), tRNA(His) and tRNA(Tyr). This is Epoxyqueuosine reductase from Escherichia coli (strain K12).